We begin with the raw amino-acid sequence, 157 residues long: Ribosomal RNA large subunit methyltransferase H (157 aa).

Residues Leu-73, Gly-105, and 124–129 (LSKMTF) each bind S-adenosyl-L-methionine.

The protein belongs to the RNA methyltransferase RlmH family. As to quaternary structure, homodimer.

It is found in the cytoplasm. The catalysed reaction is pseudouridine(1915) in 23S rRNA + S-adenosyl-L-methionine = N(3)-methylpseudouridine(1915) in 23S rRNA + S-adenosyl-L-homocysteine + H(+). Specifically methylates the pseudouridine at position 1915 (m3Psi1915) in 23S rRNA. This is Ribosomal RNA large subunit methyltransferase H from Parabacteroides distasonis (strain ATCC 8503 / DSM 20701 / CIP 104284 / JCM 5825 / NCTC 11152).